The following is a 275-amino-acid chain: Subtilisin (275 aa).

Ca(2+) is bound at residue Gln2. One can recognise a Peptidase S8 domain in the interval 5–274 (PYGISQIKAP…KGLINVQAAA (270 aa)). The Charge relay system role is filled by Asp32. Asp41 is a Ca(2+) binding site. The active-site Charge relay system is the His64. The Ca(2+) site is built by Leu75, Asn77, Ile79, Val81, Ala169, Tyr171, and Thr174. Catalysis depends on Ser221, which acts as the Charge relay system.

The protein belongs to the peptidase S8 family. Ca(2+) serves as cofactor.

Its subcellular location is the secreted. It catalyses the reaction Hydrolysis of proteins with broad specificity for peptide bonds, and a preference for a large uncharged residue in P1. Hydrolyzes peptide amides.. In terms of biological role, subtilisin is an extracellular alkaline serine protease, it catalyzes the hydrolysis of proteins and peptide amides. The chain is Subtilisin (apr) from Bacillus pumilus (Bacillus mesentericus).